A 690-amino-acid chain; its full sequence is Proprotein convertase subtilisin/kexin type 9 (690 aa).

The signal sequence occupies residues 1–28; that stretch reads MGTVSSRRSWWPLPLLLLLLLGPAGARA. Positions 29 to 150 are excised as a propeptide; it reads QEDEDGDYEE…IEEDSSVFAQ (122 aa). Sulfotyrosine is present on Tyr-36. Ser-45 is subject to Phosphoserine. The region spanning 75–147 is the Inhibitor I9 domain; the sequence is TYVVVLKEET…VDYIEEDSSV (73 aa). The 307-residue stretch at 153-459 folds into the Peptidase S8 domain; sequence PWNLERITPP…GWQLFCRTVW (307 aa). Residues Asp-184 and His-224 each act as charge relay system in the active site. Disulfide bonds link Cys-221-Cys-253 and Cys-321-Cys-356. Ser-384 functions as the Charge relay system in the catalytic mechanism. Residues 448 to 690 are C-terminal domain; the sequence is GAGWQLFCRT…HLAQASQELQ (243 aa). 3 disulfide bridges follow: Cys-455–Cys-525, Cys-475–Cys-524, and Cys-484–Cys-507. N-linked (GlcNAc...) asparagine glycosylation is present at Asn-531. 6 disulfides stabilise this stretch: Cys-532/Cys-599, Cys-550/Cys-598, Cys-560/Cys-586, Cys-606/Cys-677, Cys-624/Cys-676, and Cys-633/Cys-652. Position 686 is a phosphoserine (Ser-686).

It belongs to the peptidase S8 family. As to quaternary structure, monomer. Can self-associate to form dimers and higher multimers which may have increased LDLR degrading activity. The precursor protein but not the mature protein may form multimers. Interacts with APOB, VLDLR, LRP8/APOER2 and BACE1. The full-length immature form (pro-PCSK9) interacts with SCNN1A, SCNN1B and SCNN1G. The pro-PCSK9 form (via C-terminal domain) interacts with LDLR. Interacts (via the C-terminal domain) with ANXA2 (via repeat Annexin 1); the interaction inhibits the degradation of LDLR. Requires Ca(2+) as cofactor. In terms of processing, cleavage by furin and PCSK5 generates a truncated inactive protein that is unable to induce LDLR degradation. Post-translationally, undergoes autocatalytic cleavage in the endoplasmic reticulum to release the propeptide from the N-terminus and the cleavage of the propeptide is strictly required for its maturation and activation. The cleaved propeptide however remains associated with the catalytic domain through non-covalent interactions, preventing potential substrates from accessing its active site. As a result, it is secreted from cells as a propeptide-containing, enzymatically inactive protein. Phosphorylation protects the propeptide against proteolysis.

It is found in the cytoplasm. Its subcellular location is the secreted. The protein localises to the endosome. The protein resides in the lysosome. It localises to the cell surface. It is found in the endoplasmic reticulum. Its subcellular location is the golgi apparatus. Its activity is regulated as follows. Its proteolytic activity is autoinhibited by the non-covalent binding of the propeptide to the catalytic domain. Inhibited by EGTA. Its function is as follows. Crucial player in the regulation of plasma cholesterol homeostasis. Binds to low-density lipid receptor family members: low density lipoprotein receptor (LDLR), very low density lipoprotein receptor (VLDLR), apolipoprotein E receptor (LRP1/APOER) and apolipoprotein receptor 2 (LRP8/APOER2), and promotes their degradation in intracellular acidic compartments. Acts via a non-proteolytic mechanism to enhance the degradation of the hepatic LDLR through a clathrin LDLRAP1/ARH-mediated pathway. May prevent the recycling of LDLR from endosomes to the cell surface or direct it to lysosomes for degradation. Can induce ubiquitination of LDLR leading to its subsequent degradation. Inhibits intracellular degradation of APOB via the autophagosome/lysosome pathway in a LDLR-independent manner. Involved in the disposal of non-acetylated intermediates of BACE1 in the early secretory pathway. Inhibits epithelial Na(+) channel (ENaC)-mediated Na(+) absorption by reducing ENaC surface expression primarily by increasing its proteasomal degradation. Regulates neuronal apoptosis via modulation of LRP8/APOER2 levels and related anti-apoptotic signaling pathways. This chain is Proprotein convertase subtilisin/kexin type 9 (PCSK9), found in Pongo pygmaeus (Bornean orangutan).